Consider the following 128-residue polypeptide: Large ribosomal subunit protein bL17 (128 aa).

This sequence belongs to the bacterial ribosomal protein bL17 family. As to quaternary structure, part of the 50S ribosomal subunit. Contacts protein L32.

The protein is Large ribosomal subunit protein bL17 of Pseudomonas fluorescens (strain Pf0-1).